We begin with the raw amino-acid sequence, 207 residues long: Superoxide dismutase [Mn] (207 aa).

Positions 28, 76, 160, and 164 each coordinate Mn(2+).

The protein belongs to the iron/manganese superoxide dismutase family. Requires Mn(2+) as cofactor.

It carries out the reaction 2 superoxide + 2 H(+) = H2O2 + O2. Functionally, destroys superoxide anion radicals which are normally produced within the cells and which are toxic to biological systems. The protein is Superoxide dismutase [Mn] (sodA) of Mycolicibacterium fortuitum (Mycobacterium fortuitum).